The following is an 88-amino-acid chain: Small ribosomal subunit protein bS16c (88 aa).

Belongs to the bacterial ribosomal protein bS16 family.

The protein localises to the plastid. The protein resides in the chloroplast. In Citrus sinensis (Sweet orange), this protein is Small ribosomal subunit protein bS16c.